The following is a 424-amino-acid chain: Double homeobox protein 4-like protein 2 (424 aa).

Polar residues predominate over residues 1–10; the sequence is MALPTPSDST. Disordered regions lie at residues 1–24, 72–102, 148–167, 218–362, and 388–414; these read MALP…RRRL, SRQL…TAVT, RHPG…CSAA, LQPS…LQEP, and QPLL…PLSE. 2 consecutive DNA-binding regions (homeobox) follow at residues 19-78 and 94-153; these read GRRR…LRQH and GRRK…PGQG. Residues 265–274 are compositionally biased toward basic and acidic residues; the sequence is KSREDRDPQR. Composition is skewed to low complexity over residues 278–302 and 319–329; these read PGPC…LAPP and AGAAWEPQAGA.

It localises to the nucleus. Its function is as follows. May be involved in transcriptional regulation. This chain is Double homeobox protein 4-like protein 2 (DUX4L2), found in Homo sapiens (Human).